The following is a 288-amino-acid chain: Quinate/shikimate dehydrogenase (288 aa).

Positions 71 and 107 each coordinate substrate. Residues 132–135 (AGGA), 155–158 (NRRD), K205, 232–235 (CVYN), and G255 each bind NAD(+).

This sequence belongs to the shikimate dehydrogenase family. In terms of assembly, homodimer.

The catalysed reaction is L-quinate + NAD(+) = 3-dehydroquinate + NADH + H(+). It carries out the reaction L-quinate + NADP(+) = 3-dehydroquinate + NADPH + H(+). The enzyme catalyses shikimate + NADP(+) = 3-dehydroshikimate + NADPH + H(+). It catalyses the reaction shikimate + NAD(+) = 3-dehydroshikimate + NADH + H(+). Its pathway is metabolic intermediate biosynthesis; chorismate biosynthesis; chorismate from D-erythrose 4-phosphate and phosphoenolpyruvate: step 4/7. In terms of biological role, the actual biological function of YdiB remains unclear, nor is it known whether 3-dehydroshikimate or quinate represents the natural substrate. Catalyzes the reversible NAD-dependent reduction of both 3-dehydroshikimate (DHSA) and 3-dehydroquinate to yield shikimate (SA) and quinate, respectively. It can use both NAD or NADP for catalysis, however it has higher catalytic efficiency with NAD. The polypeptide is Quinate/shikimate dehydrogenase (Escherichia coli O17:K52:H18 (strain UMN026 / ExPEC)).